The primary structure comprises 495 residues: Keratin, type II cytoskeletal 74 (495 aa).

The tract at residues 1-105 (MASCHTAGHR…DPEIQKVRAQ (105 aa)) is head. A coil 1A region spans residues 106–141 (EREQIKALNDKFASFIDKVRFLEQQNQVLQTKWELL). Positions 106-419 (EREQIKALND…KLLEGEENRM (314 aa)) constitute an IF rod domain. The tract at residues 142–160 (QQLDLSNCRRNLEPVYEAH) is linker 1. The interval 161–252 (ISNLRKQLEM…CLYDEEISQL (92 aa)) is coil 1B. Residues 253–276 (QTHASETSVILSMDNNRDLDLAGI) form a linker 12 region. Positions 277–415 (IAEVRAHYED…ATYRKLLEGE (139 aa)) are coil 2. The tract at residues 416–495 (ENRMSGENPS…AAGTLARKTT (80 aa)) is tail. The segment at 449-495 (DSEAGNAVGSPSTPRNSQSKTRGSSVDPRDAQDESAAAAGTLARKTT) is disordered. Polar residues predominate over residues 457–472 (GSPSTPRNSQSKTRGS).

It belongs to the intermediate filament family. In terms of assembly, heterotetramer of two type I and two type II keratins. In terms of tissue distribution, expressed in epidermis with a particularly strong staining in the nail matrix, nail bed and hyponychium (at protein level).

Its function is as follows. Has a role in hair formation. Specific component of keratin intermediate filaments in the inner root sheath (IRS) of the hair follicle. The chain is Keratin, type II cytoskeletal 74 from Mus musculus (Mouse).